The primary structure comprises 218 residues: Thiopurine S-methyltransferase (218 aa).

Residues W10, L45, E66, and R123 each contribute to the S-adenosyl-L-methionine site.

The protein belongs to the class I-like SAM-binding methyltransferase superfamily. TPMT family.

The protein resides in the cytoplasm. The catalysed reaction is S-adenosyl-L-methionine + a thiopurine = S-adenosyl-L-homocysteine + a thiopurine S-methylether.. The protein is Thiopurine S-methyltransferase of Pseudomonas fluorescens (strain SBW25).